The primary structure comprises 297 residues: Urease accessory protein UreD (297 aa).

It belongs to the UreD family. As to quaternary structure, ureD, UreF and UreG form a complex that acts as a GTP-hydrolysis-dependent molecular chaperone, activating the urease apoprotein by helping to assemble the nickel containing metallocenter of UreC. The UreE protein probably delivers the nickel.

Its subcellular location is the cytoplasm. Its function is as follows. Required for maturation of urease via the functional incorporation of the urease nickel metallocenter. This chain is Urease accessory protein UreD, found in Anaeromyxobacter sp. (strain Fw109-5).